The following is a 1089-amino-acid chain: Carbamoyl phosphate synthase large chain (1089 aa).

The carboxyphosphate synthetic domain stretch occupies residues 1–399 (MPKRTDIKSI…SIQKALCSLE (399 aa)). ATP contacts are provided by Arg127, Arg167, Gly173, Gly174, Glu206, Leu208, Glu213, Gly239, Val240, His241, Gln283, and Glu297. In terms of domain architecture, ATP-grasp 1 spans 131-326 (KECMKKIGMD…IAKVATLLAV (196 aa)). Mg(2+)-binding residues include Gln283, Glu297, and Asn299. Mn(2+) is bound by residues Gln283, Glu297, and Asn299. Residues 400–553 (RSLSGFDRVK…NVSELTQSKN (154 aa)) form an oligomerization domain region. The interval 554 to 951 (DAKDKKEKKV…SYAKSQIASF (398 aa)) is carbamoyl phosphate synthetic domain. In terms of domain architecture, ATP-grasp 2 spans 680–871 (AEFITKLGIN…LAKVATRVMW (192 aa)). Residues Arg716, Gln755, Leu757, Glu762, Gly787, Ile788, His789, Ser790, Gln830, and Glu842 each coordinate ATP. 3 residues coordinate Mg(2+): Gln830, Glu842, and Asn844. 3 residues coordinate Mn(2+): Gln830, Glu842, and Asn844. Residues 952–1089 (NHLPEQGVVF…VKSLQEWLKS (138 aa)) form the MGS-like domain. The tract at residues 952 to 1089 (NHLPEQGVVF…VKSLQEWLKS (138 aa)) is allosteric domain.

It belongs to the CarB family. Composed of two chains; the small (or glutamine) chain promotes the hydrolysis of glutamine to ammonia, which is used by the large (or ammonia) chain to synthesize carbamoyl phosphate. Tetramer of heterodimers (alpha,beta)4. Mg(2+) is required as a cofactor. Mn(2+) serves as cofactor.

The enzyme catalyses hydrogencarbonate + L-glutamine + 2 ATP + H2O = carbamoyl phosphate + L-glutamate + 2 ADP + phosphate + 2 H(+). It catalyses the reaction hydrogencarbonate + NH4(+) + 2 ATP = carbamoyl phosphate + 2 ADP + phosphate + 2 H(+). Its pathway is amino-acid biosynthesis; L-arginine biosynthesis; carbamoyl phosphate from bicarbonate: step 1/1. It functions in the pathway pyrimidine metabolism; UMP biosynthesis via de novo pathway; (S)-dihydroorotate from bicarbonate: step 1/3. Functionally, large subunit of the glutamine-dependent carbamoyl phosphate synthetase (CPSase). CPSase catalyzes the formation of carbamoyl phosphate from the ammonia moiety of glutamine, carbonate, and phosphate donated by ATP, constituting the first step of 2 biosynthetic pathways, one leading to arginine and/or urea and the other to pyrimidine nucleotides. The large subunit (synthetase) binds the substrates ammonia (free or transferred from glutamine from the small subunit), hydrogencarbonate and ATP and carries out an ATP-coupled ligase reaction, activating hydrogencarbonate by forming carboxy phosphate which reacts with ammonia to form carbamoyl phosphate. This chain is Carbamoyl phosphate synthase large chain, found in Campylobacter jejuni subsp. jejuni serotype O:2 (strain ATCC 700819 / NCTC 11168).